We begin with the raw amino-acid sequence, 719 residues long: DNA ligase (719 aa).

NAD(+)-binding positions include 42-46 (DAAYD), 92-93 (SL), and Glu-126. The active-site N6-AMP-lysine intermediate is Lys-128. The NAD(+) site is built by Arg-149, Glu-185, Lys-301, and Lys-325. 4 residues coordinate Zn(2+): Cys-430, Cys-433, Cys-448, and Cys-454. A BRCT domain is found at 640 to 719 (ATGSPVEGKT…DDWFKLVGED (80 aa)).

The protein belongs to the NAD-dependent DNA ligase family. LigA subfamily. It depends on Mg(2+) as a cofactor. Requires Mn(2+) as cofactor.

The enzyme catalyses NAD(+) + (deoxyribonucleotide)n-3'-hydroxyl + 5'-phospho-(deoxyribonucleotide)m = (deoxyribonucleotide)n+m + AMP + beta-nicotinamide D-nucleotide.. Its function is as follows. DNA ligase that catalyzes the formation of phosphodiester linkages between 5'-phosphoryl and 3'-hydroxyl groups in double-stranded DNA using NAD as a coenzyme and as the energy source for the reaction. It is essential for DNA replication and repair of damaged DNA. This chain is DNA ligase, found in Brucella suis biovar 1 (strain 1330).